The primary structure comprises 249 residues: Ribosomal RNA small subunit methyltransferase J (249 aa).

Aspartate 169 serves as a coordination point for S-adenosyl-L-methionine.

The protein belongs to the methyltransferase superfamily. RsmJ family.

It localises to the cytoplasm. It carries out the reaction guanosine(1516) in 16S rRNA + S-adenosyl-L-methionine = N(2)-methylguanosine(1516) in 16S rRNA + S-adenosyl-L-homocysteine + H(+). In terms of biological role, specifically methylates the guanosine in position 1516 of 16S rRNA. The sequence is that of Ribosomal RNA small subunit methyltransferase J from Buchnera aphidicola subsp. Schizaphis graminum (strain Sg).